Consider the following 98-residue polypeptide: MNQERILQVLRAPHVSEKATVQADQNNTFVFKVAKDASKLEIKKAVEALFEVKVEAVRTANMKGKSKFFGRVAGKRVDWKKAYVSLAEGQDIDFLGAE.

This sequence belongs to the universal ribosomal protein uL23 family. In terms of assembly, part of the 50S ribosomal subunit. Contacts protein L29, and trigger factor when it is bound to the ribosome.

Functionally, one of the early assembly proteins it binds 23S rRNA. One of the proteins that surrounds the polypeptide exit tunnel on the outside of the ribosome. Forms the main docking site for trigger factor binding to the ribosome. The sequence is that of Large ribosomal subunit protein uL23 from Alcanivorax borkumensis (strain ATCC 700651 / DSM 11573 / NCIMB 13689 / SK2).